The primary structure comprises 384 residues: Interstitial collagenase (384 aa).

The N-terminal stretch at 1-25 (MLSGLWSSILALLGVFLQSVGEFRA) is a signal peptide. The propeptide at 26–88 (ETQEQDVEIV…STCGVPDVGE (63 aa)) is activation peptide. Positions 79–86 (STCGVPDV) match the Cysteine switch motif. A Zn(2+)-binding site is contributed by cysteine 81. Aspartate 113 and aspartate 129 together coordinate Ca(2+). Positions 139 and 141 each coordinate Zn(2+). The Ca(2+) site is built by aspartate 146, glycine 147, glycine 149, and asparagine 151. Position 154 (histidine 154) interacts with Zn(2+). Glycine 161, glycine 163, and aspartate 165 together coordinate Ca(2+). Histidine 167 lines the Zn(2+) pocket. Ca(2+) contacts are provided by aspartate 169, glutamate 170, and glutamate 172. Position 189 (histidine 189) interacts with Zn(2+). Residue glutamate 190 is part of the active site. Zn(2+) is bound by residues histidine 193 and histidine 199. The tract at residues 218 to 239 (LSQDDIDGPSGNPVQPRGPQTP) is disordered. Cysteines 242 and 381 form a disulfide. Ca(2+)-binding residues include aspartate 249, glutamine 277, and aspartate 347. 2 Hemopexin repeats span residues 273–319 (ELGL…FGFP) and 333–381 (KQSM…WFNC).

Belongs to the peptidase M10A family. Requires Ca(2+) as cofactor. It depends on Zn(2+) as a cofactor.

It is found in the secreted. The protein resides in the extracellular space. The protein localises to the extracellular matrix. It catalyses the reaction Cleavage of the triple helix of collagen at about three-quarters of the length of the molecule from the N-terminus, at 775-Gly-|-Ile-776 in the alpha1(I) chain. Cleaves synthetic substrates and alpha-macroglobulins at bonds where P1' is a hydrophobic residue.. Its activity is regulated as follows. Can be activated without removal of the activation peptide. Cleaves collagens of types I, II, and III at one site in the helical domain. Also cleaves collagens of types VII and X. The polypeptide is Interstitial collagenase (Aquarana catesbeiana (American bullfrog)).